The primary structure comprises 712 residues: Elongation factor G (712 aa).

The tr-type G domain occupies 8–290 (TRYRNIGISA…AVIEFLPSPT (283 aa)). GTP-binding positions include 17–24 (AHIDAGKT), 88–92 (DTPGH), and 142–145 (NKMD).

Belongs to the TRAFAC class translation factor GTPase superfamily. Classic translation factor GTPase family. EF-G/EF-2 subfamily.

It is found in the cytoplasm. Functionally, catalyzes the GTP-dependent ribosomal translocation step during translation elongation. During this step, the ribosome changes from the pre-translocational (PRE) to the post-translocational (POST) state as the newly formed A-site-bound peptidyl-tRNA and P-site-bound deacylated tRNA move to the P and E sites, respectively. Catalyzes the coordinated movement of the two tRNA molecules, the mRNA and conformational changes in the ribosome. This is Elongation factor G from Acinetobacter baumannii (strain AB0057).